The chain runs to 994 residues: NACHT, LRR and PYD domains-containing protein 4 (994 aa).

In terms of domain architecture, Pyrin spans 1 to 94 (MAASFFSDFG…CMKVMRERTG (94 aa)). The 324-residue stretch at 149–472 (RTVIIQGPQG…FYLLKSHLDH (324 aa)) folds into the NACHT domain. 155–162 (GPQGIGKT) provides a ligand contact to ATP. LRR repeat units follow at residues 637–660 (SGHL…TWCN), 698–721 (YLSF…LNYP), 722–745 (AGNV…VLAG), 750–777 (NKKL…LCSP), 806–833 (NKSV…ALKH), 863–886 (NQNL…LLCR), 920–943 (SKTL…VLCE), and 949–972 (ECAL…LLTA).

This sequence belongs to the NLRP family. In terms of assembly, interacts with CHUK/IKKA, inhibiting its kinase activity.

May be involved in inflammation and recognition of cytosolic pathogen-associated molecular patterns (PAMPs) not intercepted by membrane-bound receptors. Acts as a negative regulator of the type I interferon signaling pathway by serving as an adapter to promote DTX4-mediated ubiquitination of activated TBK1, and its subsequent degradation. Suppresses NF-kappaB induction by the cytokines TNFA and IL1B, suggesting that it operates at a point of convergence in these two cytokine signaling pathways. In Homo sapiens (Human), this protein is NACHT, LRR and PYD domains-containing protein 4.